The primary structure comprises 483 residues: Membrane-bound lytic murein transglycosylase F (483 aa).

A signal peptide spans 1–18 (MKGLIARFIAGFALLLWA). Positions 19–267 (WDMVFPWQQL…RIEEKYFNHL (249 aa)) are non-LT domain. The tract at residues 269–483 (HFDYVDIQSY…SKESDSTLKE (215 aa)) is LT domain. The active site involves Glu312. A disordered region spans residues 458 to 483 (QQIQNNEEQPSVPQEISKESDSTLKE). Over residues 473–483 (ISKESDSTLKE) the composition is skewed to basic and acidic residues.

This sequence in the N-terminal section; belongs to the bacterial solute-binding protein 3 family. In the C-terminal section; belongs to the transglycosylase Slt family.

It is found in the cell outer membrane. It catalyses the reaction Exolytic cleavage of the (1-&gt;4)-beta-glycosidic linkage between N-acetylmuramic acid (MurNAc) and N-acetylglucosamine (GlcNAc) residues in peptidoglycan, from either the reducing or the non-reducing ends of the peptidoglycan chains, with concomitant formation of a 1,6-anhydrobond in the MurNAc residue.. In terms of biological role, murein-degrading enzyme that degrades murein glycan strands and insoluble, high-molecular weight murein sacculi, with the concomitant formation of a 1,6-anhydromuramoyl product. Lytic transglycosylases (LTs) play an integral role in the metabolism of the peptidoglycan (PG) sacculus. Their lytic action creates space within the PG sacculus to allow for its expansion as well as for the insertion of various structures such as secretion systems and flagella. The protein is Membrane-bound lytic murein transglycosylase F of Actinobacillus pleuropneumoniae serotype 3 (strain JL03).